A 643-amino-acid polypeptide reads, in one-letter code: 1-deoxy-D-xylulose-5-phosphate synthase (643 aa).

Thiamine diphosphate contacts are provided by residues histidine 78 and 119–121 (AHS). Aspartate 150 contacts Mg(2+). Residues 151–152 (GS), asparagine 179, tyrosine 288, and glutamate 370 contribute to the thiamine diphosphate site. Asparagine 179 is a Mg(2+) binding site.

This sequence belongs to the transketolase family. DXPS subfamily. In terms of assembly, homodimer. Mg(2+) serves as cofactor. Thiamine diphosphate is required as a cofactor.

It catalyses the reaction D-glyceraldehyde 3-phosphate + pyruvate + H(+) = 1-deoxy-D-xylulose 5-phosphate + CO2. The protein operates within metabolic intermediate biosynthesis; 1-deoxy-D-xylulose 5-phosphate biosynthesis; 1-deoxy-D-xylulose 5-phosphate from D-glyceraldehyde 3-phosphate and pyruvate: step 1/1. Its function is as follows. Catalyzes the acyloin condensation reaction between C atoms 2 and 3 of pyruvate and glyceraldehyde 3-phosphate to yield 1-deoxy-D-xylulose-5-phosphate (DXP). This Brucella abortus (strain 2308) protein is 1-deoxy-D-xylulose-5-phosphate synthase.